The sequence spans 287 residues: Ribosomal RNA small subunit methyltransferase A (287 aa).

A compositionally biased stretch (polar residues) spans methionine 1–leucine 15. Residues methionine 1–histidine 20 form a disordered region. Residues asparagine 29, leucine 31, glycine 56, glutamate 77, and asparagine 126 each contribute to the S-adenosyl-L-methionine site.

The protein belongs to the class I-like SAM-binding methyltransferase superfamily. rRNA adenine N(6)-methyltransferase family. RsmA subfamily.

The protein localises to the cytoplasm. The catalysed reaction is adenosine(1518)/adenosine(1519) in 16S rRNA + 4 S-adenosyl-L-methionine = N(6)-dimethyladenosine(1518)/N(6)-dimethyladenosine(1519) in 16S rRNA + 4 S-adenosyl-L-homocysteine + 4 H(+). Specifically dimethylates two adjacent adenosines (A1518 and A1519) in the loop of a conserved hairpin near the 3'-end of 16S rRNA in the 30S particle. May play a critical role in biogenesis of 30S subunits. This is Ribosomal RNA small subunit methyltransferase A from Psychrobacter cryohalolentis (strain ATCC BAA-1226 / DSM 17306 / VKM B-2378 / K5).